The chain runs to 608 residues: tRNA (guanine(37)-N(1))-methyltransferase 1 (608 aa).

Residues 207–229 (SRPKKKKRRKEEERSEGKKRTGK) form a disordered region. Positions 216-229 (KEEERSEGKKRTGK) are enriched in basic and acidic residues. Residues R425, 463-464 (DL), 491-492 (DG), and N514 contribute to the S-adenosyl-L-methionine site.

It belongs to the class I-like SAM-binding methyltransferase superfamily. TRM5/TYW2 family. Monomer.

Its subcellular location is the mitochondrion matrix. The protein resides in the nucleus. It localises to the cytoplasm. The enzyme catalyses guanosine(37) in tRNA + S-adenosyl-L-methionine = N(1)-methylguanosine(37) in tRNA + S-adenosyl-L-homocysteine + H(+). Functionally, specifically methylates the N1 position of guanosine-37 in various cytoplasmic and mitochondrial tRNAs. Methylation is not dependent on the nature of the nucleoside 5' of the target nucleoside. This is the first step in the biosynthesis of wybutosine (yW), a modified base adjacent to the anticodon of tRNAs and required for accurate decoding. The polypeptide is tRNA (guanine(37)-N(1))-methyltransferase 1 (Vitis vinifera (Grape)).